A 100-amino-acid polypeptide reads, in one-letter code: Urease subunit gamma (100 aa).

This sequence belongs to the urease gamma subunit family. As to quaternary structure, heterotrimer of UreA (gamma), UreB (beta) and UreC (alpha) subunits. Three heterotrimers associate to form the active enzyme.

The protein resides in the cytoplasm. It carries out the reaction urea + 2 H2O + H(+) = hydrogencarbonate + 2 NH4(+). It participates in nitrogen metabolism; urea degradation; CO(2) and NH(3) from urea (urease route): step 1/1. This Lysinibacillus sphaericus (strain C3-41) protein is Urease subunit gamma.